Here is a 73-residue protein sequence, read N- to C-terminus: Protein WFDC10B (73 aa).

An N-terminal signal peptide occupies residues 1–21; that stretch reads MAPQTLLLVLVLCVLLLQAQG. A WAP domain is found at 28 to 73; that stretch reads RMQRIKVCEKRPSIDLCIHHCSYFQKCETNKICCSAFCGNICMSIL.

As to expression, ubiquitously expressed.

The protein resides in the secreted. This Homo sapiens (Human) protein is Protein WFDC10B (WFDC10B).